A 343-amino-acid chain; its full sequence is MTSFLRSDRSRPVALWLFVVAVLVFAMVVVGGATRLTDSGLSITQWKPIMGALPPMSDEAWRANFELYKKIPQYRLVNAGMTLEAYKGIFWWEWAHRLLGRLVGVVFAIPFVFFLIRRMIPRRLIWRCAVLLGLGGLQGVVGWWMVSSGLSERVSVAPERLMTHLGLALALFVFVIWTALDAWAGSPRVEERTNWRGWALAFLGAVFFQSLLGALVAGNDAGLVYNDWPLMNGALVPAEYAGHGFWGTLAHSQGAVQLHHRLMAYALFVAAIVAGVAAARSRRLPEEAKLTAFVLVGVVCLQAGLGIWTLMTAVPLALGVLHQAGAAILLATATTFAWRVRRP.

A run of 8 helical transmembrane segments spans residues 13-33 (VALW…VGGA), 96-116 (HRLL…FFLI), 130-150 (VLLG…SSGL), 165-185 (LGLA…AWAG), 197-217 (GWAL…ALVA), 258-278 (LHHR…GVAA), 290-310 (LTAF…IWTL), and 311-331 (MTAV…ILLA). Residue His-260 participates in heme binding. A heme-binding site is contributed by His-322.

This sequence belongs to the COX15/CtaA family. Type 2 subfamily. Interacts with CtaB. The cofactor is heme b.

Its subcellular location is the cell membrane. It catalyses the reaction Fe(II)-heme o + 2 A + H2O = Fe(II)-heme a + 2 AH2. It participates in porphyrin-containing compound metabolism; heme A biosynthesis; heme A from heme O: step 1/1. Catalyzes the conversion of heme O to heme A by two successive hydroxylations of the methyl group at C8. The first hydroxylation forms heme I, the second hydroxylation results in an unstable dihydroxymethyl group, which spontaneously dehydrates, resulting in the formyl group of heme A. The polypeptide is Heme A synthase (Caulobacter sp. (strain K31)).